Reading from the N-terminus, the 1030-residue chain is Protein phosphatase 1 regulatory subunit 12A (1030 aa).

Residues 35–38 (KVKF) carry the KVKF motif motif. 6 ANK repeats span residues 39–68 (DDGA…DINY), 72–101 (DGLT…NINQ), 105–134 (EGWI…HVGA), 138–164 (EGDT…RQGV), 198–227 (SGGT…DVNI), and 231–260 (DGWT…DMEM). Residues asparagine 67 and asparagine 100 each carry the (3S)-3-hydroxyasparagine; by HIF1AN; partial modification. Asparagine 226 carries the (3S)-3-hydroxyasparagine; by HIF1AN; partial modification. 2 disordered regions span residues 290 to 628 (LHSE…SVPT) and 643 to 928 (ASTT…EKDD). Residues 291–300 (HSEKRDKKSP) show a composition bias toward basic and acidic residues. At serine 299 the chain carries Phosphoserine. The segment covering 302–316 (IESTANMDNNQSQKT) has biased composition (polar residues). Positions 318–340 (KNKETLIIEPEKNASRIESLEQE) are enriched in basic and acidic residues. A compositionally biased stretch (acidic residues) spans 357-369 (SEEDEEDDSESEA). Low complexity predominate over residues 385–402 (TSSTQAAPVAVTTPTVSS). Phosphoserine is present on residues serine 422 and serine 432. Residues 422–432 (SPKEEERKDES) are compositionally biased toward basic and acidic residues. A Phosphothreonine modification is found at threonine 443. Serine 445 is modified (phosphoserine; by NUAK1). Residue tyrosine 446 is modified to Phosphotyrosine. The span at 469 to 480 (RSASSPRLSSSL) shows a compositional bias: low complexity. Serine 472 carries the phosphoserine; by NUAK1 modification. Serine 473 carries the post-translational modification Phosphoserine; by CDK1. Position 477 is a phosphoserine (serine 477). Residues 481–491 (DNKEKEKDSKG) are compositionally biased toward basic and acidic residues. A phosphoserine mark is found at serine 507 and serine 509. Positions 540–551 (NSSVNEGSTYHK) are enriched in polar residues. Positions 564–610 (SSSVPSTTSTPTVTSAAGLQKSLLSSTSTTTKITTGSSSAGTQSSTS) are enriched in low complexity. 2 positions are modified to phosphoserine: serine 601 and serine 618. A compositionally biased stretch (basic and acidic residues) spans 614-625 (WAEDSTEKEKDS). Positions 643–660 (ASTTTLTTTTAGTVSSTT) are enriched in low complexity. Residues 673–682 (VRDEESESQR) show a composition bias toward basic and acidic residues. The tract at residues 682-864 (RKARSRQARQ…VSFWTQDSDE (183 aa)) is interaction with ROCK2. Residues 683–693 (KARSRQARQSR) show a composition bias toward basic residues. A phosphoserine; by PKA and PKG; in vitro mark is found at serine 692 and serine 695. Position 696 is a phosphothreonine; by ROCK1, ROCK2, CDC42BP, ZIPK/DAPK3 and RAF1 (threonine 696). The span at 718 to 767 (RTREQENEEKEKEEKEKQDKEKQEEKKESETSREDEYKQKYSRTYDETYQ) shows a compositional bias: basic and acidic residues. Residues 773–795 (STSSSTTPSSSLSTMSSSLYASS) show a composition bias toward low complexity. Residues 796 to 810 (QLNRPNSLVGITSAY) are compositionally biased toward polar residues. Position 802 is a phosphoserine (serine 802). Basic and acidic residues predominate over residues 814–840 (ITKENEREGEKREEEKEGEDKSQPKSI). Residues 841 to 852 (RERRRPREKRRS) are compositionally biased toward basic residues. Serine 852 bears the Phosphoserine; by ROCK2 mark. The segment covering 861 to 875 (DSDENEQEQQSDTEE) has biased composition (acidic residues). 2 positions are modified to phosphoserine: serine 862 and serine 871. A compositionally biased stretch (polar residues) spans 884–897 (TDSISRYETSSTSA). Residues serine 903 and serine 908 each carry the phosphoserine modification. Over residues 903-913 (SLLGRSGSYSY) the composition is skewed to low complexity. Serine 910 is subject to Phosphoserine; by NUAK1. Residues 914 to 928 (LEERKPYSSRLEKDD) are compositionally biased toward basic and acidic residues. Position 995 is a phosphoserine (serine 995).

PP1 comprises a catalytic subunit, PPP1CA, PPP1CB or PPP1CC, and one or several targeting or regulatory subunits. PPP1R12A mediates binding to myosin. Interacts with ARHA and CIT. Binds PPP1R12B, ROCK1 and IL16. Interacts directly with PRKG1. Non-covalent dimer of 2 dimers; PRKG1-PRKG1 and PPP1R12A-PPP1R12A. Interacts with SMTNL1. Interacts with PPP1CB; the interaction is direct. Interacts (when phosphorylated at Ser-445, Ser-472 and Ser-910) with 14-3-3. Interacts with ROCK1 and ROCK2. Interacts with isoform 1 and isoform 2 of ZIPK/DAPK3. Interacts with RAF1. Interacts with HIF1AN. Interacts with NCKAP1L. Post-translationally, phosphorylated by CIT (Rho-associated kinase). Phosphorylated cooperatively by ROCK1 and CDC42BP on Thr-696. Phosphorylated on upon DNA damage, probably by ATM or ATR. In vitro, phosphorylation of Ser-695 by PKA and PKG appears to prevent phosphorylation of the inhibitory site Thr-696, probably mediated by PRKG1. Phosphorylation at Ser-445, Ser-472 and Ser-910 by NUAK1 promotes interaction with 14-3-3, leading to inhibit interaction with myosin light chain MLC2, preventing dephosphorylation of MLC2. May be phosphorylated at Thr-696 by DMPK; may inhibit the myosin phosphatase activity. Phosphorylated at Ser-473 by CDK1 during mitosis, creating docking sites for the POLO box domains of PLK1. Subsequently, PLK1 binds and phosphorylates PPP1R12A. Expressed in striated muscles, specifically in type 2a fibers (at protein level).

It is found in the cytoplasm. It localises to the cytoskeleton. The protein resides in the stress fiber. In terms of biological role, key regulator of protein phosphatase 1C (PPP1C). Mediates binding to myosin. As part of the PPP1C complex, involved in dephosphorylation of PLK1. Capable of inhibiting HIF1AN-dependent suppression of HIF1A activity. This chain is Protein phosphatase 1 regulatory subunit 12A, found in Homo sapiens (Human).